The chain runs to 861 residues: Probable alpha,alpha-trehalose-phosphate synthase [UDP-forming] 10 (861 aa).

Phosphoserine is present on Ser-5. Thr-32 is subject to Phosphothreonine. Residues 59–546 (ERKIIVANFL…ARSFSQDLER (488 aa)) form a glycosyltransferase region.

It in the N-terminal section; belongs to the glycosyltransferase 20 family. This sequence in the C-terminal section; belongs to the trehalose phosphatase family.

It catalyses the reaction D-glucose 6-phosphate + UDP-alpha-D-glucose = alpha,alpha-trehalose 6-phosphate + UDP + H(+). This is Probable alpha,alpha-trehalose-phosphate synthase [UDP-forming] 10 (TPS10) from Arabidopsis thaliana (Mouse-ear cress).